A 141-amino-acid polypeptide reads, in one-letter code: ATP synthase F(0) complex subunit C2, mitochondrial (141 aa).

Residues 1–66 (MFSCFKFIST…RNFQTSAISR (66 aa)) constitute a mitochondrion transit peptide. A helical membrane pass occupies residues 82 to 102 (VGVAGSGAGIGTVFGSLIIGY). K109 bears the N6,N6,N6-trimethyllysine mark. Residues 117–137 (ILGFALSEAMGLFCLMVAFLI) form a helical membrane-spanning segment.

It belongs to the ATPase C chain family. In terms of assembly, F-type ATPases have 2 components, CF(1) - the catalytic core - and CF(0) - the membrane proton channel. CF(1) has five subunits: alpha(3), beta(3), gamma(1), delta(1), epsilon(1). CF(0) has three main subunits: a, b and c. Interacts with DNAJC30; interaction is direct. Trimethylated by ATPSCKMT at Lys-109. Methylation is required for proper incorporation of the C subunit into the ATP synthase complex and mitochondrial respiration.

The protein localises to the mitochondrion membrane. Mitochondrial membrane ATP synthase (F(1)F(0) ATP synthase or Complex V) produces ATP from ADP in the presence of a proton gradient across the membrane which is generated by electron transport complexes of the respiratory chain. F-type ATPases consist of two structural domains, F(1) - containing the extramembraneous catalytic core and F(0) - containing the membrane proton channel, linked together by a central stalk and a peripheral stalk. During catalysis, ATP synthesis in the catalytic domain of F(1) is coupled via a rotary mechanism of the central stalk subunits to proton translocation. Part of the complex F(0) domain. A homomeric c-ring of probably 10 subunits is part of the complex rotary element. In Pongo abelii (Sumatran orangutan), this protein is ATP synthase F(0) complex subunit C2, mitochondrial.